The following is a 331-amino-acid chain: Cytosolic arginine sensor for mTORC1 subunit 1 (331 aa).

Serine 14 is modified (phosphoserine). 2 ACT domains span residues 72–137 (AEAT…HTLA) and 259–320 (GELW…DILQ). L-arginine-binding positions include 110 to 111 (SV), glycine 273, 279 to 280 (IV), and 299 to 303 (TFNFD).

Belongs to the GATS family. In terms of assembly, forms homodimers and heterodimers with CASTOR2. Interacts with the GATOR2 complex which is composed of MIOS, SEC13, SEH1L, WDR24 and WDR59; the interaction is negatively regulated by arginine. Interacts with TM4SF5; the interaction is positively regulated by leucine and is negatively regulated by arginine. Post-translationally, phosphorylation at Ser-14 by AKT1, promoting the interaction between CASTOR1 and RNF167. In terms of processing, ubiquitinated by RNF167 via 'Lys-29'-polyubiquitination, leading to its degradation, releasing the GATOR2 complex. Ubiquitination by RNF167 is promoted by phosphorylation at Ser-14 by AKT1.

It localises to the cytoplasm. Its subcellular location is the cytosol. In terms of biological role, functions as an intracellular arginine sensor within the amino acid-sensing branch of the TORC1 signaling pathway. As a homodimer or a heterodimer with CASTOR2, binds and inhibits the GATOR subcomplex GATOR2 and thereby mTORC1. Binding of arginine to CASTOR1 allosterically disrupts the interaction of CASTOR1-containing dimers with GATOR2 which can in turn activate mTORC1 and the TORC1 signaling pathway. The protein is Cytosolic arginine sensor for mTORC1 subunit 1 of Mus musculus (Mouse).